The primary structure comprises 1286 residues: DNA-directed RNA polymerase 147 kDa polypeptide (1286 aa).

Belongs to the poxviridae DNA-directed RNA polymerase 147 kDa subunit family. In terms of assembly, the DNA-dependent RNA polymerase used for intermediate and late genes expression consists of eight subunits Rpo30/OPG66, Rpo7/OPG90, Rpo22/OPG103, Rpo147/OPG105, Rpo18/OPG119, Rpo19/OPG131, Rpo132/OPG151 and Rpo35/OPG156. The same holoenzyme, with the addition of the transcription-specificity factor OPG109, is used for early gene expression.

The protein resides in the virion. It catalyses the reaction RNA(n) + a ribonucleoside 5'-triphosphate = RNA(n+1) + diphosphate. Its function is as follows. Part of the DNA-dependent RNA polymerase which catalyzes the transcription of viral DNA into RNA using the four ribonucleoside triphosphates as substrates. Responsible for the transcription of early, intermediate and late genes. DNA-dependent RNA polymerase associates with the early transcription factor (ETF), itself composed of OPG118 and OPG133, thereby allowing the early genes transcription. Late transcription, and probably also intermediate transcription, require newly synthesized RNA polymerase. The polypeptide is DNA-directed RNA polymerase 147 kDa polypeptide (OPG105) (Variola virus (isolate Human/India/Ind3/1967) (VARV)).